The primary structure comprises 282 residues: ATP phosphoribosyltransferase (282 aa).

Belongs to the ATP phosphoribosyltransferase family. Long subfamily. It depends on Mg(2+) as a cofactor.

The protein localises to the cytoplasm. It carries out the reaction 1-(5-phospho-beta-D-ribosyl)-ATP + diphosphate = 5-phospho-alpha-D-ribose 1-diphosphate + ATP. It functions in the pathway amino-acid biosynthesis; L-histidine biosynthesis; L-histidine from 5-phospho-alpha-D-ribose 1-diphosphate: step 1/9. Feedback inhibited by histidine. Catalyzes the condensation of ATP and 5-phosphoribose 1-diphosphate to form N'-(5'-phosphoribosyl)-ATP (PR-ATP). Has a crucial role in the pathway because the rate of histidine biosynthesis seems to be controlled primarily by regulation of HisG enzymatic activity. This Micrococcus luteus (strain ATCC 4698 / DSM 20030 / JCM 1464 / CCM 169 / CCUG 5858 / IAM 1056 / NBRC 3333 / NCIMB 9278 / NCTC 2665 / VKM Ac-2230) (Micrococcus lysodeikticus) protein is ATP phosphoribosyltransferase.